A 321-amino-acid chain; its full sequence is ATP-dependent 6-phosphofructokinase (321 aa).

Gly-11 is a binding site for ATP. Residue 21–25 (RAVVR) coordinates ADP. Residues 72–73 (RC) and 102–105 (GDGS) contribute to the ATP site. Position 103 (Asp-103) interacts with Mg(2+). 126–128 (TID) lines the substrate pocket. Catalysis depends on Asp-128, which acts as the Proton acceptor. ADP is bound at residue Arg-155. Substrate contacts are provided by residues Arg-163 and 170–172 (MGR). ADP contacts are provided by residues 186–188 (GAE), Arg-212, and 214–216 (KLH). Substrate is bound by residues Glu-223, Arg-245, and 251-254 (HIQR).

Belongs to the phosphofructokinase type A (PFKA) family. ATP-dependent PFK group I subfamily. Prokaryotic clade 'B1' sub-subfamily. Homotetramer. Mg(2+) serves as cofactor.

The protein localises to the cytoplasm. It carries out the reaction beta-D-fructose 6-phosphate + ATP = beta-D-fructose 1,6-bisphosphate + ADP + H(+). It functions in the pathway carbohydrate degradation; glycolysis; D-glyceraldehyde 3-phosphate and glycerone phosphate from D-glucose: step 3/4. Allosterically activated by ADP and other diphosphonucleosides, and allosterically inhibited by phosphoenolpyruvate. Catalyzes the phosphorylation of D-fructose 6-phosphate to fructose 1,6-bisphosphate by ATP, the first committing step of glycolysis. This is ATP-dependent 6-phosphofructokinase from Thermoanaerobacter pseudethanolicus (strain ATCC 33223 / 39E) (Clostridium thermohydrosulfuricum).